Here is a 256-residue protein sequence, read N- to C-terminus: Geranylgeranylglyceryl phosphate synthase (256 aa).

2 residues coordinate Mg(2+): Asp-28 and Ser-53. Residues 172 to 178 (YLEAGSG), 203 to 204 (GG), and 225 to 226 (GT) each bind sn-glycerol 1-phosphate.

The protein belongs to the GGGP/HepGP synthase family. Group II subfamily. Mg(2+) serves as cofactor.

The protein resides in the cytoplasm. It carries out the reaction sn-glycerol 1-phosphate + (2E,6E,10E)-geranylgeranyl diphosphate = sn-3-O-(geranylgeranyl)glycerol 1-phosphate + diphosphate. Its pathway is membrane lipid metabolism; glycerophospholipid metabolism. Its function is as follows. Prenyltransferase that catalyzes the transfer of the geranylgeranyl moiety of geranylgeranyl diphosphate (GGPP) to the C3 hydroxyl of sn-glycerol-1-phosphate (G1P). This reaction is the first ether-bond-formation step in the biosynthesis of archaeal membrane lipids. The protein is Geranylgeranylglyceryl phosphate synthase of Methanococcus maripaludis (strain C7 / ATCC BAA-1331).